The sequence spans 348 residues: Phospho-2-dehydro-3-deoxyheptonate aldolase, Trp-sensitive (348 aa).

The protein belongs to the class-I DAHP synthase family.

The catalysed reaction is D-erythrose 4-phosphate + phosphoenolpyruvate + H2O = 7-phospho-2-dehydro-3-deoxy-D-arabino-heptonate + phosphate. Its pathway is metabolic intermediate biosynthesis; chorismate biosynthesis; chorismate from D-erythrose 4-phosphate and phosphoenolpyruvate: step 1/7. In terms of biological role, stereospecific condensation of phosphoenolpyruvate (PEP) and D-erythrose-4-phosphate (E4P) giving rise to 3-deoxy-D-arabino-heptulosonate-7-phosphate (DAHP). The chain is Phospho-2-dehydro-3-deoxyheptonate aldolase, Trp-sensitive (aroH) from Escherichia coli O6:H1 (strain CFT073 / ATCC 700928 / UPEC).